A 1184-amino-acid polypeptide reads, in one-letter code: MATVSGRRRKRKIQLSKLFTLTGAKACFKPDHSKIGRSGFSRVVFCNQPDSPEAESRNYCDNYVRTTKYTLATFLPKSLFEQFRRVANFYFLVVGILSFTPLAPYTAVSAIVPLTFVILATMFKEGVEDWRRKQQDIEVNNRKVRVHRGNGNFDLREWKTLRVGDILKVEKNEFFPADLVLLSSSYEDAVCYVETMNLDGETNLKLKQGLEVTLSLREELNFRDFEAFIKCEDPNANLYSFVGTMDLKGEKYPLSPQQLLLRGSKLRNTDYIYGVVIFTGPDTKVVQNSTDPPSKRSMIERKMDKIIYLMFLMVFSLAFFGSVLFGIWTRDDFQNGVMERWYLKPDDSSIFFDPKRAPMAAIYHFLTALMLNSYFIPISLYVSIEIVKVLQSIFINQDIHMYYEEADKPAHARTSNLNEELGQVGTILSDKTGTLTCNSMEFIKCSIAGTAYGRGVTEVEMAMDKRKGSALVNQSNGNSTEDAVAAEPAVKGFNFRDERIMDGNWVTETHADVIQKFFQLLAVCHTVIPEVDEDTGKISYEAESPDEAAFVIAARELGFEFFTRTQTTISVRELDLVTGERVERLYSVLNVLEFSSSKKRMSVIVQDQDGKLLLLCKGADSVMFERLSESGRKYEKETRDHVNEYADAGLRTLILAYRELDENEYEVFTERISEAKNSVSADREALIDEVTEKIEKNLVLLGATAVEDKLQNGVPDCINKLAQAGIKIWVLTGDKMETAINIGFACSLLRRDMKQIIINLETPEIQQLEKSGEKDAIAALKENVLHQITSGKAQLKASGGNAKAFALIIDGKSLAYALEEDMKGIFLELAIGCASVICCRSSPKQKALVTRLVKTGSGQTTLAIGDGANDVGMLQEADIGVGISGVEGMQAVMSSDIAIAQFRYLERLLLVHGHWCYRRISKMICYFFYKNITFGFTLFLYEAYTSFSATPAYNDWYLSLYSVFFTSLPVICLGIFDQDVSAPFCLKFPVLYQEGVQNLLFSWRRILSWMFHGFCSAIIIFFLCKTSLESQAFNHEGKTAGRDILGGTMYTCVVWVVSLQMVLTISYFTLIQHVVVWGSVVIWYLFLMVYGSLPIRMSTDAYMVFLEALAPAPSYWITTLFVVLSTMMPYFIFSAIQMRFFPMSHGTVQLLRYEDQCSNSGNFEMGRQGSVRPTLVMRSHQPES.

Residues 1 to 75 (MATVSGRRRK…TTKYTLATFL (75 aa)) lie on the Cytoplasmic side of the membrane. A helical membrane pass occupies residues 76–97 (PKSLFEQFRRVANFYFLVVGIL). Residues 98-101 (SFTP) are Extracellular-facing. A helical transmembrane segment spans residues 102–124 (LAPYTAVSAIVPLTFVILATMFK). Residues 125–306 (EGVEDWRRKQ…SMIERKMDKI (182 aa)) lie on the Cytoplasmic side of the membrane. A helical transmembrane segment spans residues 307–328 (IYLMFLMVFSLAFFGSVLFGIW). The Extracellular portion of the chain corresponds to 329 to 364 (TRDDFQNGVMERWYLKPDDSSIFFDPKRAPMAAIYH). The helical transmembrane segment at 365 to 382 (FLTALMLNSYFIPISLYV) threads the bilayer. The Cytoplasmic portion of the chain corresponds to 383-921 (SIEIVKVLQS…HGHWCYRRIS (539 aa)). Asp-430 (4-aspartylphosphate intermediate) is an active-site residue. Residues Asp-866 and Asp-870 each coordinate Mg(2+). The chain crosses the membrane as a helical span at residues 922 to 941 (KMICYFFYKNITFGFTLFLY). Topologically, residues 942 to 955 (EAYTSFSATPAYND) are extracellular. Residues 956-975 (WYLSLYSVFFTSLPVICLGI) traverse the membrane as a helical segment. The Cytoplasmic portion of the chain corresponds to 976–1005 (FDQDVSAPFCLKFPVLYQEGVQNLLFSWRR). The chain crosses the membrane as a helical span at residues 1006–1028 (ILSWMFHGFCSAIIIFFLCKTSL). Residues 1029-1041 (ESQAFNHEGKTAG) lie on the Extracellular side of the membrane. A helical membrane pass occupies residues 1042–1064 (RDILGGTMYTCVVWVVSLQMVLT). Over 1065–1070 (ISYFTL) the chain is Cytoplasmic. A helical transmembrane segment spans residues 1071–1091 (IQHVVVWGSVVIWYLFLMVYG). Residues 1092–1108 (SLPIRMSTDAYMVFLEA) lie on the Extracellular side of the membrane. A helical membrane pass occupies residues 1109-1133 (LAPAPSYWITTLFVVLSTMMPYFIF). Residues 1134-1184 (SAIQMRFFPMSHGTVQLLRYEDQCSNSGNFEMGRQGSVRPTLVMRSHQPES) lie on the Cytoplasmic side of the membrane.

Belongs to the cation transport ATPase (P-type) (TC 3.A.3) family. Type IV subfamily.

The protein localises to the membrane. It catalyses the reaction ATP + H2O + phospholipidSide 1 = ADP + phosphate + phospholipidSide 2.. Functionally, involved in transport of phospholipids. This chain is Probable phospholipid-transporting ATPase 12, found in Arabidopsis thaliana (Mouse-ear cress).